Reading from the N-terminus, the 155-residue chain is Ribonuclease H (155 aa).

The region spanning 4–145 is the RNase H type-1 domain; the sequence is QQKVVEIYTD…ADALARKAIA (142 aa). Positions 13, 51, 73, and 137 each coordinate Mg(2+).

It belongs to the RNase H family. Monomer. Mg(2+) is required as a cofactor.

It is found in the cytoplasm. It catalyses the reaction Endonucleolytic cleavage to 5'-phosphomonoester.. In terms of biological role, endonuclease that specifically degrades the RNA of RNA-DNA hybrids. The polypeptide is Ribonuclease H (Bartonella tribocorum (strain CIP 105476 / IBS 506)).